A 434-amino-acid polypeptide reads, in one-letter code: 3-isopropylmalate dehydratase large subunit 1 (434 aa).

Residues Cys308, Cys368, and Cys371 each contribute to the [4Fe-4S] cluster site.

Belongs to the aconitase/IPM isomerase family. LeuC type 2 subfamily. In terms of assembly, heterodimer of LeuC and LeuD. [4Fe-4S] cluster serves as cofactor.

The enzyme catalyses (2R,3S)-3-isopropylmalate = (2S)-2-isopropylmalate. It participates in amino-acid biosynthesis; L-leucine biosynthesis; L-leucine from 3-methyl-2-oxobutanoate: step 2/4. Its function is as follows. Catalyzes the isomerization between 2-isopropylmalate and 3-isopropylmalate, via the formation of 2-isopropylmaleate. The sequence is that of 3-isopropylmalate dehydratase large subunit 1 from Deinococcus radiodurans (strain ATCC 13939 / DSM 20539 / JCM 16871 / CCUG 27074 / LMG 4051 / NBRC 15346 / NCIMB 9279 / VKM B-1422 / R1).